A 384-amino-acid chain; its full sequence is Galactokinase (384 aa).

Residue glutamate 34–aspartate 37 participates in substrate binding. Serine 123 to serine 129 is a binding site for ATP. Residues serine 129 and glutamate 161 each contribute to the Mg(2+) site. Aspartate 173 functions as the Proton acceptor in the catalytic mechanism. Tyrosine 222 lines the substrate pocket.

Belongs to the GHMP kinase family. GalK subfamily.

The protein localises to the cytoplasm. It catalyses the reaction alpha-D-galactose + ATP = alpha-D-galactose 1-phosphate + ADP + H(+). It participates in carbohydrate metabolism; galactose metabolism. Catalyzes the transfer of the gamma-phosphate of ATP to D-galactose to form alpha-D-galactose-1-phosphate (Gal-1-P). This chain is Galactokinase, found in Actinobacillus pleuropneumoniae (Haemophilus pleuropneumoniae).